Consider the following 405-residue polypeptide: K(+)/H(+) antiporter subunit KhtU (405 aa).

12 helical membrane passes run H3–N23, I29–I49, I60–F80, L85–S105, L108–I128, L153–S173, V183–A203, V222–H242, L268–I288, V297–V317, I332–A352, and A357–V377.

Belongs to the monovalent cation:proton antiporter 2 (CPA2) transporter (TC 2.A.37) family. In terms of assembly, the transporter is composed of the integral membrane protein KhtU and the regulatory protein KhtT.

The protein localises to the cell membrane. With respect to regulation, potassium antiport activity requires the presence of KhtT. Activity is also modulated by KhtS. Has higher activity at alkaline pH. Its function is as follows. Potassium/proton antiporter that mediates the efflux of potassium ions from the cell. Can also mediate rubidium/proton antiport, but has no permeability for sodium or lithium ions. In the absence of KhtT, does not have antiport activity, but can catalyze potassium efflux. Involved in protection of the cell from methylglyoxal, a toxic by-product of glycolysis, via activation by S-lactoyl-BSH of the antiporter activity, leading to cytoplasmic acidification and methylglyoxal resistance. The chain is K(+)/H(+) antiporter subunit KhtU from Bacillus subtilis (strain 168).